A 267-amino-acid chain; its full sequence is DNA damage-regulated autophagy modulator protein 2 (267 aa).

Transmembrane regions (helical) follow at residues 8–28, 53–73, 87–107, 118–138, 160–180, and 203–223; these read LSFLPSALVIWTFATFIFSYI, RCLFGVMLNIAAVLGIATIYV, LIIKLNKAGLVLGILSCLGLS, FIVHVCGAVLAFSMGSFYMFV, LLLVIWCGVSALSMMTCSSIL, and VLHIVTTAAEWSMSFSFFGFF.

This sequence belongs to the DRAM/TMEM150 family.

The protein localises to the lysosome membrane. Its subcellular location is the photoreceptor inner segment. It is found in the apical cell membrane. Plays a role in the initiation of autophagy. In the retina, might be involved in the process of photoreceptor cells renewal and recycling to preserve visual function. Induces apoptotic cell death when coexpressed with DRAM1. This is DNA damage-regulated autophagy modulator protein 2 (Dram2) from Rattus norvegicus (Rat).